The chain runs to 345 residues: Holliday junction branch migration complex subunit RuvB (345 aa).

Residues 1–182 are large ATPase domain (RuvB-L); that stretch reads MDQRIIASSS…FGIVQRLEFY (182 aa). Residues I21, R22, G63, K66, T67, T68, 129–131, R172, Y182, and R219 each bind ATP; that span reads EDF. T67 provides a ligand contact to Mg(2+). The segment at 183 to 253 is small ATPAse domain (RuvB-S); sequence SPQELTRIVI…VAQAAMQMLK (71 aa). The tract at residues 256 to 345 is head domain (RuvB-H); it reads PEGFDELDRR…PGIGEPGDLF (90 aa). Positions 292, 311, and 316 each coordinate DNA.

It belongs to the RuvB family. Homohexamer. Forms an RuvA(8)-RuvB(12)-Holliday junction (HJ) complex. HJ DNA is sandwiched between 2 RuvA tetramers; dsDNA enters through RuvA and exits via RuvB. An RuvB hexamer assembles on each DNA strand where it exits the tetramer. Each RuvB hexamer is contacted by two RuvA subunits (via domain III) on 2 adjacent RuvB subunits; this complex drives branch migration. In the full resolvosome a probable DNA-RuvA(4)-RuvB(12)-RuvC(2) complex forms which resolves the HJ.

It localises to the cytoplasm. It carries out the reaction ATP + H2O = ADP + phosphate + H(+). The RuvA-RuvB-RuvC complex processes Holliday junction (HJ) DNA during genetic recombination and DNA repair, while the RuvA-RuvB complex plays an important role in the rescue of blocked DNA replication forks via replication fork reversal (RFR). RuvA specifically binds to HJ cruciform DNA, conferring on it an open structure. The RuvB hexamer acts as an ATP-dependent pump, pulling dsDNA into and through the RuvAB complex. RuvB forms 2 homohexamers on either side of HJ DNA bound by 1 or 2 RuvA tetramers; 4 subunits per hexamer contact DNA at a time. Coordinated motions by a converter formed by DNA-disengaged RuvB subunits stimulates ATP hydrolysis and nucleotide exchange. Immobilization of the converter enables RuvB to convert the ATP-contained energy into a lever motion, pulling 2 nucleotides of DNA out of the RuvA tetramer per ATP hydrolyzed, thus driving DNA branch migration. The RuvB motors rotate together with the DNA substrate, which together with the progressing nucleotide cycle form the mechanistic basis for DNA recombination by continuous HJ branch migration. Branch migration allows RuvC to scan DNA until it finds its consensus sequence, where it cleaves and resolves cruciform DNA. This Xanthomonas oryzae pv. oryzae (strain MAFF 311018) protein is Holliday junction branch migration complex subunit RuvB.